A 320-amino-acid chain; its full sequence is Probable arabinan endo-1,5-alpha-L-arabinosidase C (320 aa).

The signal sequence occupies residues 1–16 (MYRSTLLFLFIALVNA). D31 acts as the Proton acceptor in catalysis. N73, N137, and N191 each carry an N-linked (GlcNAc...) asparagine glycan. E199 serves as the catalytic Proton donor.

It belongs to the glycosyl hydrolase 43 family.

The protein resides in the secreted. The catalysed reaction is Endohydrolysis of (1-&gt;5)-alpha-arabinofuranosidic linkages in (1-&gt;5)-arabinans.. Its pathway is glycan metabolism; L-arabinan degradation. In terms of biological role, endo-1,5-alpha-L-arabinanase involved in degradation of pectin. Its preferred substrate is linear 1,5-alpha-L-arabinan. This Aspergillus terreus (strain NIH 2624 / FGSC A1156) protein is Probable arabinan endo-1,5-alpha-L-arabinosidase C (abnC).